Reading from the N-terminus, the 396-residue chain is Elongation factor Tu (396 aa).

The 197-residue stretch at 10-206 (KPHCNIGTIG…QVDAYIPQPE (197 aa)) folds into the tr-type G domain. Positions 19–26 (GHVDHGKT) are G1. Residue 19–26 (GHVDHGKT) coordinates GTP. A Mg(2+)-binding site is contributed by Thr26. The G2 stretch occupies residues 60–64 (GITIS). The interval 81–84 (DCPG) is G3. Residues 81 to 85 (DCPGH) and 136 to 139 (NKVD) each bind GTP. Residues 136-139 (NKVD) are G4. Positions 174-176 (SAL) are G5.

This sequence belongs to the TRAFAC class translation factor GTPase superfamily. Classic translation factor GTPase family. EF-Tu/EF-1A subfamily. As to quaternary structure, monomer.

The protein localises to the cytoplasm. The catalysed reaction is GTP + H2O = GDP + phosphate + H(+). In terms of biological role, GTP hydrolase that promotes the GTP-dependent binding of aminoacyl-tRNA to the A-site of ribosomes during protein biosynthesis. This is Elongation factor Tu from Gluconobacter oxydans (strain 621H) (Gluconobacter suboxydans).